Reading from the N-terminus, the 731-residue chain is Lanosterol synthase ERG7 (731 aa).

Thr2 carries the N-acetylthreonine modification. The PFTB 1 repeat unit spans residues 125-167 (RIELIRYIVNTAHPVDGGWGLHSVDKSTVFGTVLNYVILRLLG). The Proton donor role is filled by Asp456. One copy of the PFTB 2 repeat lies at 615-661 (VRKGCDFLVSKQMKDGGWGESMKSSELHSYVDSEKSLVVQTAWALIA).

The protein belongs to the terpene cyclase/mutase family.

The protein localises to the lipid droplet. Its subcellular location is the endoplasmic reticulum membrane. It carries out the reaction (S)-2,3-epoxysqualene = lanosterol. The protein operates within terpene metabolism; lanosterol biosynthesis; lanosterol from farnesyl diphosphate: step 3/3. With respect to regulation, catalytic activity requires the presence of ERG27. Functionally, lanosterol synthase; part of the third module of ergosterol biosynthesis pathway that includes the late steps of the pathway. ERG7 catalyzes the cyclization of (S)-2,3 oxidosqualene to lanosterol, a reaction that forms the sterol core. The third module or late pathway involves the ergosterol synthesis itself through consecutive reactions that mainly occur in the endoplasmic reticulum (ER) membrane. Firstly, the squalene synthase ERG9 catalyzes the condensation of 2 farnesyl pyrophosphate moieties to form squalene, which is the precursor of all steroids. Squalene synthase is crucial for balancing the incorporation of farnesyl diphosphate (FPP) into sterol and nonsterol isoprene synthesis. Secondly, the squalene epoxidase ERG1 catalyzes the stereospecific oxidation of squalene to (S)-2,3-epoxysqualene, which is considered to be a rate-limiting enzyme in steroid biosynthesis. Then, the lanosterol synthase ERG7 catalyzes the cyclization of (S)-2,3 oxidosqualene to lanosterol, a reaction that forms the sterol core. In the next steps, lanosterol is transformed to zymosterol through a complex process involving various demethylation, reduction and desaturation reactions. The lanosterol 14-alpha-demethylase ERG11 (also known as CYP51) catalyzes C14-demethylation of lanosterol to produce 4,4'-dimethyl cholesta-8,14,24-triene-3-beta-ol, which is critical for ergosterol biosynthesis. The C-14 reductase ERG24 reduces the C14=C15 double bond of 4,4-dimethyl-cholesta-8,14,24-trienol to produce 4,4-dimethyl-cholesta-8,24-dienol. 4,4-dimethyl-cholesta-8,24-dienol is substrate of the C-4 demethylation complex ERG25-ERG26-ERG27 in which ERG25 catalyzes the three-step monooxygenation required for the demethylation of 4,4-dimethyl and 4alpha-methylsterols, ERG26 catalyzes the oxidative decarboxylation that results in a reduction of the 3-beta-hydroxy group at the C-3 carbon to an oxo group, and ERG27 is responsible for the reduction of the keto group on the C-3. ERG28 has a role as a scaffold to help anchor ERG25, ERG26 and ERG27 to the endoplasmic reticulum and ERG29 regulates the activity of the iron-containing C4-methylsterol oxidase ERG25. Then, the sterol 24-C-methyltransferase ERG6 catalyzes the methyl transfer from S-adenosyl-methionine to the C-24 of zymosterol to form fecosterol. The C-8 sterol isomerase ERG2 catalyzes the reaction which results in unsaturation at C-7 in the B ring of sterols and thus converts fecosterol to episterol. The sterol-C5-desaturase ERG3 then catalyzes the introduction of a C-5 double bond in the B ring to produce 5-dehydroepisterol. The C-22 sterol desaturase ERG5 further converts 5-dehydroepisterol into ergosta-5,7,22,24(28)-tetraen-3beta-ol by forming the C-22(23) double bond in the sterol side chain. Finally, ergosta-5,7,22,24(28)-tetraen-3beta-ol is substrate of the C-24(28) sterol reductase ERG4 to produce ergosterol. This Saccharomyces cerevisiae (strain ATCC 204508 / S288c) (Baker's yeast) protein is Lanosterol synthase ERG7.